A 688-amino-acid chain; its full sequence is Two-component response regulator ORR23 (688 aa).

Residues 25 to 140 form the Response regulatory domain; the sequence is RVLAVDDDPV…ELRNIWQHVI (116 aa). Asp76 bears the 4-aspartylphosphate mark. The tract at residues 161–212 is disordered; the sequence is PPNADSDHVHGHVTCGSPDQSGRPSKKRKEYCSEEEDEGEVNTQDIDDPSAP. The span at 193 to 208 shows a compositional bias: acidic residues; it reads SEEEDEGEVNTQDIDD. The myb-like GARP DNA-binding region spans 211–270; sequence APKKPRVVWSVELHRKFVAAVNQLGIDKAVPKRILELMNVEKLTRENVASHLQKYRLYLK.

Belongs to the ARR family. Type-B subfamily. In terms of processing, two-component system major event consists of a His-to-Asp phosphorelay between a sensor histidine kinase (HK) and a response regulator (RR). In plants, the His-to-Asp phosphorelay involves an additional intermediate named Histidine-containing phosphotransfer protein (HPt). This multistep phosphorelay consists of a His-Asp-His-Asp sequential transfer of a phosphate group between first a His and an Asp of the HK protein, followed by the transfer to a conserved His of the HPt protein and finally the transfer to an Asp in the receiver domain of the RR protein.

The protein localises to the nucleus. Transcriptional activator that binds specific DNA sequence. Functions as a response regulator involved in His-to-Asp phosphorelay signal transduction system. Phosphorylation of the Asp residue in the receiver domain activates the ability of the protein to promote the transcription of target genes. May directly activate some type-A response regulators in response to cytokinins. The sequence is that of Two-component response regulator ORR23 from Oryza sativa subsp. japonica (Rice).